The sequence spans 500 residues: NAD(P)H-quinone oxidoreductase chain 4, chloroplastic (500 aa).

Helical transmembrane passes span 4–24, 37–57, 84–104, 111–129, 134–154, 167–187, 208–228, 242–262, 272–292, 305–325, 330–350, 386–406, 416–436, and 462–482; these read FPWL…ILFL, LCIC…HFQL, GISI…TLAA, SRVF…IGPF, LLLF…LLSM, FILY…GICL, ALEM…SPII, HYST…YGLV, AHSI…IYAA, IAYS…SIND, GAIL…FLAG, LALP…GILT, ILIT…SLSM, and FFVS…PDFV.

This sequence belongs to the complex I subunit 4 family.

The protein localises to the plastid. It is found in the chloroplast thylakoid membrane. The catalysed reaction is a plastoquinone + NADH + (n+1) H(+)(in) = a plastoquinol + NAD(+) + n H(+)(out). The enzyme catalyses a plastoquinone + NADPH + (n+1) H(+)(in) = a plastoquinol + NADP(+) + n H(+)(out). This is NAD(P)H-quinone oxidoreductase chain 4, chloroplastic from Morus indica (Mulberry).